The following is a 402-amino-acid chain: Phosphoglycerate kinase (402 aa).

Residues 29–31 (DFN), arginine 45, 69–72 (HLGR), arginine 125, and arginine 158 contribute to the substrate site. Residues lysine 209, glutamate 331, and 357–360 (GGDT) contribute to the ATP site.

It belongs to the phosphoglycerate kinase family.

It localises to the cytoplasm. It catalyses the reaction (2R)-3-phosphoglycerate + ATP = (2R)-3-phospho-glyceroyl phosphate + ADP. It functions in the pathway carbohydrate degradation; glycolysis; pyruvate from D-glyceraldehyde 3-phosphate: step 2/5. This Helicobacter pylori (strain J99 / ATCC 700824) (Campylobacter pylori J99) protein is Phosphoglycerate kinase (pgk).